Here is a 443-residue protein sequence, read N- to C-terminus: ATP-dependent protease ATPase subunit HslU (443 aa).

ATP is bound by residues I19, 61-66, D256, E321, and R393; that span reads GVGKTE.

This sequence belongs to the ClpX chaperone family. HslU subfamily. A double ring-shaped homohexamer of HslV is capped on each side by a ring-shaped HslU homohexamer. The assembly of the HslU/HslV complex is dependent on binding of ATP.

The protein localises to the cytoplasm. Its function is as follows. ATPase subunit of a proteasome-like degradation complex; this subunit has chaperone activity. The binding of ATP and its subsequent hydrolysis by HslU are essential for unfolding of protein substrates subsequently hydrolyzed by HslV. HslU recognizes the N-terminal part of its protein substrates and unfolds these before they are guided to HslV for hydrolysis. The protein is ATP-dependent protease ATPase subunit HslU of Cupriavidus pinatubonensis (strain JMP 134 / LMG 1197) (Cupriavidus necator (strain JMP 134)).